Here is a 1598-residue protein sequence, read N- to C-terminus: Pentafunctional AROM polypeptide (1598 aa).

The tract at residues 1–384 (MGVPTKISIL…YEPRASTVSN (384 aa)) is 3-dehydroquinate synthase. NAD(+) contacts are provided by residues 44–46 (DTN), 81–84 (ESSK), 114–116 (GGV), and aspartate 119. Arginine 130 contributes to the 7-phospho-2-dehydro-3-deoxy-D-arabino-heptonate binding site. Residue 139–140 (TT) coordinates NAD(+). The 7-phospho-2-dehydro-3-deoxy-D-arabino-heptonate site is built by aspartate 146 and lysine 152. Lysine 161 lines the NAD(+) pocket. Asparagine 162 lines the 7-phospho-2-dehydro-3-deoxy-D-arabino-heptonate pocket. Residues 179-182 (FLNT) and asparagine 190 contribute to the NAD(+) site. Residue glutamate 194 coordinates Zn(2+). 7-phospho-2-dehydro-3-deoxy-D-arabino-heptonate is bound by residues 194-197 (EVIK) and lysine 250. Glutamate 260 functions as the Proton acceptor; for 3-dehydroquinate synthase activity in the catalytic mechanism. Residues 264–268 (RNLLN) and histidine 271 contribute to the 7-phospho-2-dehydro-3-deoxy-D-arabino-heptonate site. Histidine 271 is a binding site for Zn(2+). The active-site Proton acceptor; for 3-dehydroquinate synthase activity is the histidine 275. The 7-phospho-2-dehydro-3-deoxy-D-arabino-heptonate site is built by histidine 287 and lysine 356. Histidine 287 is a Zn(2+) binding site. The tract at residues 397–842 (VYPGFPKSLN…WNTLAQTFKV (446 aa)) is EPSP synthase. Cysteine 824 acts as the For EPSP synthase activity in catalysis. Positions 867–1059 (AASIFIIGMR…RRKENTFFVS (193 aa)) are shikimate kinase. An ATP-binding site is contributed by 874–881 (GMRGAGKT). The interval 1060-1280 (LTFPDLTPAS…AAPGQLSARE (221 aa)) is 3-dehydroquinase. Histidine 1183 acts as the Proton acceptor; for 3-dehydroquinate dehydratase activity in catalysis. The active-site Schiff-base intermediate with substrate; for 3-dehydroquinate dehydratase activity is lysine 1211. The shikimate dehydrogenase stretch occupies residues 1293–1598 (AKKFAVIGKP…GVSSSDDTIS (306 aa)).

The protein in the N-terminal section; belongs to the sugar phosphate cyclases superfamily. Dehydroquinate synthase family. It in the 2nd section; belongs to the EPSP synthase family. This sequence in the 3rd section; belongs to the shikimate kinase family. In the 4th section; belongs to the type-I 3-dehydroquinase family. The protein in the C-terminal section; belongs to the shikimate dehydrogenase family. Homodimer. The cofactor is Zn(2+).

It localises to the cytoplasm. The enzyme catalyses 7-phospho-2-dehydro-3-deoxy-D-arabino-heptonate = 3-dehydroquinate + phosphate. It carries out the reaction 3-dehydroquinate = 3-dehydroshikimate + H2O. The catalysed reaction is shikimate + NADP(+) = 3-dehydroshikimate + NADPH + H(+). It catalyses the reaction shikimate + ATP = 3-phosphoshikimate + ADP + H(+). The enzyme catalyses 3-phosphoshikimate + phosphoenolpyruvate = 5-O-(1-carboxyvinyl)-3-phosphoshikimate + phosphate. It functions in the pathway metabolic intermediate biosynthesis; chorismate biosynthesis; chorismate from D-erythrose 4-phosphate and phosphoenolpyruvate: step 2/7. Its pathway is metabolic intermediate biosynthesis; chorismate biosynthesis; chorismate from D-erythrose 4-phosphate and phosphoenolpyruvate: step 3/7. It participates in metabolic intermediate biosynthesis; chorismate biosynthesis; chorismate from D-erythrose 4-phosphate and phosphoenolpyruvate: step 4/7. The protein operates within metabolic intermediate biosynthesis; chorismate biosynthesis; chorismate from D-erythrose 4-phosphate and phosphoenolpyruvate: step 5/7. It functions in the pathway metabolic intermediate biosynthesis; chorismate biosynthesis; chorismate from D-erythrose 4-phosphate and phosphoenolpyruvate: step 6/7. Functionally, the AROM polypeptide catalyzes 5 consecutive enzymatic reactions in prechorismate polyaromatic amino acid biosynthesis. The sequence is that of Pentafunctional AROM polypeptide from Paracoccidioides brasiliensis (strain Pb18).